A 475-amino-acid chain; its full sequence is Ribulose bisphosphate carboxylase large chain (475 aa).

Positions Met-1–Ser-2 are excised as a propeptide. Pro-3 is subject to N-acetylproline. Lys-14 bears the N6,N6,N6-trimethyllysine mark. The substrate site is built by Asn-123 and Thr-173. Catalysis depends on Lys-175, which acts as the Proton acceptor. Lys-177 is a substrate binding site. Mg(2+)-binding residues include Lys-201, Asp-203, and Glu-204. Lys-201 is modified (N6-carboxylysine). Residue His-294 is the Proton acceptor of the active site. Residues Arg-295, His-327, and Ser-379 each coordinate substrate.

Belongs to the RuBisCO large chain family. Type I subfamily. In terms of assembly, heterohexadecamer of 8 large chains and 8 small chains; disulfide-linked. The disulfide link is formed within the large subunit homodimers. It depends on Mg(2+) as a cofactor. Post-translationally, the disulfide bond which can form in the large chain dimeric partners within the hexadecamer appears to be associated with oxidative stress and protein turnover.

The protein resides in the plastid. It is found in the chloroplast. The enzyme catalyses 2 (2R)-3-phosphoglycerate + 2 H(+) = D-ribulose 1,5-bisphosphate + CO2 + H2O. It carries out the reaction D-ribulose 1,5-bisphosphate + O2 = 2-phosphoglycolate + (2R)-3-phosphoglycerate + 2 H(+). Its function is as follows. RuBisCO catalyzes two reactions: the carboxylation of D-ribulose 1,5-bisphosphate, the primary event in carbon dioxide fixation, as well as the oxidative fragmentation of the pentose substrate in the photorespiration process. Both reactions occur simultaneously and in competition at the same active site. This is Ribulose bisphosphate carboxylase large chain from Notothixos subaureus (Golden mistletoe).